We begin with the raw amino-acid sequence, 126 residues long: Histone H2B type 1-K (126 aa).

The span at 1 to 12 shows a compositional bias: low complexity; it reads MPEPAKSAPAPK. Positions 1 to 36 are disordered; the sequence is MPEPAKSAPAPKKGSKKAVTKAQKKDGKKRKRSRKE. Proline 2 carries the post-translational modification N-acetylproline. An ADP-ribosyl glutamic acid modification is found at glutamate 3. An N6-(2-hydroxyisobutyryl)lysine; alternate modification is found at lysine 6. Position 6 is an N6-(beta-hydroxybutyryl)lysine; alternate (lysine 6). An N6-acetyllysine; alternate modification is found at lysine 6. The residue at position 6 (lysine 6) is an N6-butyryllysine; alternate. N6-crotonyllysine; alternate is present on lysine 6. Position 6 is an N6-lactoyllysine; alternate (lysine 6). A Glycyl lysine isopeptide (Lys-Gly) (interchain with G-Cter in SUMO2); alternate cross-link involves residue lysine 6. Serine 7 carries the post-translational modification ADP-ribosylserine. The residue at position 12 (lysine 12) is an N6-(beta-hydroxybutyryl)lysine; alternate. N6-acetyllysine; alternate is present on residues lysine 12 and lysine 13. N6-crotonyllysine; alternate is present on residues lysine 12 and lysine 13. Lysine 12 carries the N6-lactoyllysine; alternate modification. Residue lysine 13 is modified to N6-(2-hydroxyisobutyryl)lysine; alternate. Serine 15 carries the phosphoserine; by STK4/MST1 modification. Lysine 16, lysine 17, lysine 21, and lysine 24 each carry N6-acetyllysine; alternate. N6-crotonyllysine; alternate occurs at positions 16, 17, 21, and 24. 4 positions are modified to N6-lactoyllysine; alternate: lysine 16, lysine 17, lysine 21, and lysine 24. An N6-glutaryllysine; alternate modification is found at lysine 17. N6-(2-hydroxyisobutyryl)lysine; alternate occurs at positions 21 and 24. The residue at position 21 (lysine 21) is an N6-(beta-hydroxybutyryl)lysine; alternate. An N6-butyryllysine; alternate modification is found at lysine 21. Lysine 21 participates in a covalent cross-link: Glycyl lysine isopeptide (Lys-Gly) (interchain with G-Cter in SUMO2); alternate. Lysine 25 carries the N6-(2-hydroxyisobutyryl)lysine modification. The residue at position 35 (lysine 35) is an N6-(2-hydroxyisobutyryl)lysine; alternate. An N6-(beta-hydroxybutyryl)lysine; alternate modification is found at lysine 35. Residue lysine 35 is modified to N6-crotonyllysine; alternate. An N6-glutaryllysine; alternate modification is found at lysine 35. Position 35 is an N6-succinyllysine; alternate (lysine 35). Residue lysine 35 forms a Glycyl lysine isopeptide (Lys-Gly) (interchain with G-Cter in ubiquitin); alternate linkage. Glutamate 36 carries the polyADP-ribosyl glutamic acid modification. A Phosphoserine; by AMPK modification is found at serine 37. N6-(2-hydroxyisobutyryl)lysine; alternate occurs at positions 44, 47, and 58. Lysine 44 carries the post-translational modification N6-lactoyllysine; alternate. N6-glutaryllysine; alternate is present on residues lysine 44 and lysine 47. Lysine 47 carries the post-translational modification N6-methyllysine; alternate. Lysine 58 carries the N6,N6-dimethyllysine; alternate modification. A Dimethylated arginine modification is found at arginine 80. Position 86 is an N6-(2-hydroxyisobutyryl)lysine; alternate (lysine 86). An N6-acetyllysine; alternate modification is found at lysine 86. Residue lysine 86 is modified to N6-lactoyllysine; alternate. An N6,N6,N6-trimethyllysine; alternate modification is found at lysine 86. 2 positions are modified to omega-N-methylarginine: arginine 87 and arginine 93. Lysine 109 is modified (N6-(2-hydroxyisobutyryl)lysine; alternate). Lysine 109 carries the N6-(beta-hydroxybutyryl)lysine; alternate modification. Lysine 109 bears the N6-lactoyllysine; alternate mark. At lysine 109 the chain carries N6-glutaryllysine; alternate. Lysine 109 carries the N6-methyllysine; alternate modification. Serine 113 carries an O-linked (GlcNAc) serine glycan. Threonine 116 is subject to Phosphothreonine. An N6-(2-hydroxyisobutyryl)lysine; alternate mark is found at lysine 117 and lysine 121. Lysine 117 is subject to N6-(beta-hydroxybutyryl)lysine; alternate. Lysine 117 and lysine 121 each carry N6-lactoyllysine; alternate. An N6-glutaryllysine; alternate mark is found at lysine 117 and lysine 121. Residues lysine 117 and lysine 121 each carry the N6-succinyllysine; alternate modification. Lysine 117 carries the post-translational modification N6-methylated lysine; alternate. A Glycyl lysine isopeptide (Lys-Gly) (interchain with G-Cter in ubiquitin); alternate cross-link involves residue lysine 121.

The protein belongs to the histone H2B family. The nucleosome is a histone octamer containing two molecules each of H2A, H2B, H3 and H4 assembled in one H3-H4 heterotetramer and two H2A-H2B heterodimers. The octamer wraps approximately 147 bp of DNA. Monoubiquitination at Lys-35 (H2BK34Ub) by the MSL1/MSL2 dimer is required for histone H3 'Lys-4' (H3K4me) and 'Lys-79' (H3K79me) methylation and transcription activation at specific gene loci, such as HOXA9 and MEIS1 loci. Similarly, monoubiquitination at Lys-121 (H2BK120Ub) by the RNF20/40 complex gives a specific tag for epigenetic transcriptional activation and is also prerequisite for histone H3 'Lys-4' and 'Lys-79' methylation. It also functions cooperatively with the FACT dimer to stimulate elongation by RNA polymerase II. H2BK120Ub also acts as a regulator of mRNA splicing: deubiquitination by USP49 is required for efficient cotranscriptional splicing of a large set of exons. Post-translationally, phosphorylated on Ser-15 (H2BS14ph) by STK4/MST1 during apoptosis; which facilitates apoptotic chromatin condensation. Also phosphorylated on Ser-15 in response to DNA double strand breaks (DSBs), and in correlation with somatic hypermutation and immunoglobulin class-switch recombination. Phosphorylation at Ser-37 (H2BS36ph) by AMPK in response to stress promotes transcription. In terms of processing, glcNAcylation at Ser-113 promotes monoubiquitination of Lys-121. It fluctuates in response to extracellular glucose, and associates with transcribed genes. ADP-ribosylated by PARP1 or PARP2 on Ser-7 (H2BS6ADPr) in response to DNA damage. H2BS6ADPr promotes recruitment of CHD1L. Mono-ADP-ribosylated on Glu-3 (H2BE2ADPr) by PARP3 in response to single-strand breaks. Poly ADP-ribosylation on Glu-36 (H2BE35ADPr) by PARP1 regulates adipogenesis: it inhibits phosphorylation at Ser-37 (H2BS36ph), thereby blocking expression of pro-adipogenetic genes. Post-translationally, crotonylation (Kcr) is specifically present in male germ cells and marks testis-specific genes in post-meiotic cells, including X-linked genes that escape sex chromosome inactivation in haploid cells. Crotonylation marks active promoters and enhancers and confers resistance to transcriptional repressors. It is also associated with post-meiotically activated genes on autosomes. In terms of processing, hydroxybutyrylation of histones is induced by starvation. Lactylated in macrophages by EP300/P300 by using lactoyl-CoA directly derived from endogenous or exogenous lactate, leading to stimulates gene transcription.

It localises to the nucleus. The protein localises to the chromosome. Core component of nucleosome. Nucleosomes wrap and compact DNA into chromatin, limiting DNA accessibility to the cellular machineries which require DNA as a template. Histones thereby play a central role in transcription regulation, DNA repair, DNA replication and chromosomal stability. DNA accessibility is regulated via a complex set of post-translational modifications of histones, also called histone code, and nucleosome remodeling. In Mus musculus (Mouse), this protein is Histone H2B type 1-K.